Reading from the N-terminus, the 146-residue chain is Hemoglobin subunit delta (146 aa).

Residues 2–146 enclose the Globin domain; the sequence is HLTGDEKSAV…VATALAHKYH (145 aa). Phosphoserine is present on Ser50. Heme b-binding residues include His63 and His92.

The protein belongs to the globin family. As to quaternary structure, heterotetramer of two delta chains and two alpha chains. In terms of tissue distribution, red blood cells.

The polypeptide is Hemoglobin subunit delta (HBD) (Aotus trivirgatus (Three-striped night monkey)).